Consider the following 796-residue polypeptide: DnaJ homolog subfamily C member 10 (796 aa).

Positions 1–33 are cleaved as a signal peptide; it reads MKHSLNTATSSSSVLKRTILYLVLISLAALVYC. Positions 36–100 constitute a J domain; the sequence is DYYDLLGVSK…DLRKKYDKYG (65 aa). The region spanning 131-233 is the Thioredoxin 1 domain; that stretch reads EIITLDRGEF…ERLVNFAMPY (103 aa). C159 and C162 are oxidised to a cystine. 2 trxb regions span residues 236 to 351 and 349 to 464; these read STVT…LPDL and PDLE…PTNF. 3 Thioredoxin domains span residues 455–554, 558–668, and 672–780; these read HVIT…IEDL, SVVT…ALMY, and ASFD…ITKR. A disulfide bond links C481 and C484. A glycan (N-linked (GlcNAc...) asparagine) is linked at N531. Disulfide bonds link C589–C592 and C701–C704. N-linked (GlcNAc...) asparagine glycosylation occurs at N753. Positions 793–796 match the Prevents secretion from ER motif; it reads KDEL.

It localises to the endoplasmic reticulum lumen. Endoplasmic reticulum disulfide reductase involved both in the correct folding of proteins and degradation of misfolded proteins. Required for efficient folding of proteins in the endoplasmic reticulum by catalyzing the removal of non-native disulfide bonds formed during the folding of proteins. Also involved in endoplasmic reticulum-associated degradation (ERAD) by reducing incorrect disulfide bonds in misfolded glycoproteins. The sequence is that of DnaJ homolog subfamily C member 10 (dnajc10) from Xenopus laevis (African clawed frog).